A 294-amino-acid chain; its full sequence is tRNA pseudouridine synthase B (294 aa).

D38 (nucleophile) is an active-site residue.

It belongs to the pseudouridine synthase TruB family. Type 1 subfamily.

The enzyme catalyses uridine(55) in tRNA = pseudouridine(55) in tRNA. Functionally, responsible for synthesis of pseudouridine from uracil-55 in the psi GC loop of transfer RNAs. In Clostridium perfringens (strain SM101 / Type A), this protein is tRNA pseudouridine synthase B.